The chain runs to 415 residues: Alpha-2Db adrenergic receptor (415 aa).

Topologically, residues 1-33 are extracellular; the sequence is MDLSTITFLLPNSSEDTNGTSAPRLPPHSQCAS. Asn12 and Asn18 each carry an N-linked (GlcNAc...) asparagine glycan. Residues 34 to 58 form a helical membrane-spanning segment; sequence VLIVLVVTVIILVTIVGNVLVVVAV. At 59–70 the chain is on the cytoplasmic side; it reads FTSRALRAPQNL. A helical transmembrane segment spans residues 71–96; the sequence is FLVSLAAADILVATLVIPFSLANEVM. Residues 97–106 lie on the Extracellular side of the membrane; the sequence is GYWYLGSTWC. A disulfide bridge links Cys106 with Cys179. Residues 107–129 form a helical membrane-spanning segment; it reads AFYLALDVLFCTSSIVHLCAISL. The Cytoplasmic portion of the chain corresponds to 130–150; the sequence is DRYWSVTKAVSYNLKRTPRRI. Residues 151-173 form a helical membrane-spanning segment; sequence KIMITVVWVISAVISFPPLLMTK. Topologically, residues 174-184 are extracellular; that stretch reads HDELECLLNNE. The N-linked (GlcNAc...) asparagine glycan is linked to Asn183. The chain crosses the membrane as a helical span at residues 185 to 208; that stretch reads TWYILSSCIVSFFAPGLIMILVYC. Over 209–339 the chain is Cytoplasmic; sequence RIYRVAKQRA…QMREKRFTFV (131 aa). A disordered region spans residues 234 to 299; sequence QSETCFVRKG…EGAQSCPKPN (66 aa). Residues 276–286 show a composition bias toward basic residues; the sequence is NRHRNSRFAKS. The helical transmembrane segment at 340 to 363 threads the bilayer; it reads LAVVMGVFVLCWFPFFFTYSLHAI. At 364–376 the chain is on the extracellular side; the sequence is CRKSCTIPDSLFN. Residues 377–397 form a helical membrane-spanning segment; that stretch reads LFFWIGYCNSSVNPIIYTIFN. Residues 398-415 lie on the Cytoplasmic side of the membrane; the sequence is RDFRKAFKKIMCRHSTRT.

This sequence belongs to the G-protein coupled receptor 1 family. Adrenergic receptor subfamily. ADRA2D sub-subfamily.

It localises to the cell membrane. Alpha-2 adrenergic receptors mediate the catecholamine-induced inhibition of adenylate cyclase through the action of G proteins. The order of potency for this receptor is dexmedetomidine &gt; norepinephrine = epinephrine &gt; oxymetazoline. This is Alpha-2Db adrenergic receptor (adra2db) from Danio rerio (Zebrafish).